A 346-amino-acid polypeptide reads, in one-letter code: N-acetyl-gamma-glutamyl-phosphate reductase (346 aa).

Cys-149 is a catalytic residue.

It belongs to the NAGSA dehydrogenase family. Type 1 subfamily.

Its subcellular location is the cytoplasm. The enzyme catalyses N-acetyl-L-glutamate 5-semialdehyde + phosphate + NADP(+) = N-acetyl-L-glutamyl 5-phosphate + NADPH + H(+). The protein operates within amino-acid biosynthesis; L-arginine biosynthesis; N(2)-acetyl-L-ornithine from L-glutamate: step 3/4. Its function is as follows. Catalyzes the NADPH-dependent reduction of N-acetyl-5-glutamyl phosphate to yield N-acetyl-L-glutamate 5-semialdehyde. This chain is N-acetyl-gamma-glutamyl-phosphate reductase, found in Citrifermentans bemidjiense (strain ATCC BAA-1014 / DSM 16622 / JCM 12645 / Bem) (Geobacter bemidjiensis).